The sequence spans 283 residues: uncharacterized protein (283 aa).

D121 is a catalytic residue.

It belongs to the pseudouridine synthase RluA family.

The catalysed reaction is a uridine in RNA = a pseudouridine in RNA. This is an uncharacterized protein from Bacillus subtilis (strain 168).